We begin with the raw amino-acid sequence, 95 residues long: Small ribosomal subunit protein uS14 (95 aa).

It belongs to the universal ribosomal protein uS14 family. Part of the 30S ribosomal subunit. Contacts proteins S3 and S10.

In terms of biological role, binds 16S rRNA, required for the assembly of 30S particles and may also be responsible for determining the conformation of the 16S rRNA at the A site. This is Small ribosomal subunit protein uS14 from Fusobacterium nucleatum subsp. nucleatum (strain ATCC 25586 / DSM 15643 / BCRC 10681 / CIP 101130 / JCM 8532 / KCTC 2640 / LMG 13131 / VPI 4355).